Consider the following 482-residue polypeptide: Catalase easC (482 aa).

Residue His58 is part of the active site. Residue Tyr347 coordinates heme.

It belongs to the catalase family. The cofactor is heme.

It functions in the pathway alkaloid biosynthesis; ergot alkaloid biosynthesis. Catalase; part of the gene cluster that mediates the biosynthesis of fungal ergot alkaloid. DmaW catalyzes the first step of ergot alkaloid biosynthesis by condensing dimethylallyl diphosphate (DMAP) and tryptophan to form 4-dimethylallyl-L-tryptophan. The second step is catalyzed by the methyltransferase easF that methylates 4-dimethylallyl-L-tryptophan in the presence of S-adenosyl-L-methionine, resulting in the formation of 4-dimethylallyl-L-abrine. The catalase easC and the FAD-dependent oxidoreductase easE then transform 4-dimethylallyl-L-abrine to chanoclavine-I which is further oxidized by easD in the presence of NAD(+), resulting in the formation of chanoclavine-I aldehyde. Chanoclavine-I aldehyde is the precursor of ergoamides and ergopeptines in Clavicipitaceae, and clavine-type alcaloids such as fumiclavine in Trichocomaceae. However, the metabolites downstream of chanoclavine-I aldehyde in Arthrodermataceae have not been identified yet. In Arthroderma otae (strain ATCC MYA-4605 / CBS 113480) (Microsporum canis), this protein is Catalase easC.